We begin with the raw amino-acid sequence, 185 residues long: Large ribosomal subunit protein uL5 (185 aa).

It belongs to the universal ribosomal protein uL5 family. Part of the 50S ribosomal subunit; part of the 5S rRNA/L5/L18/L25 subcomplex. Contacts the 5S rRNA and the P site tRNA. Forms a bridge to the 30S subunit in the 70S ribosome.

This is one of the proteins that bind and probably mediate the attachment of the 5S RNA into the large ribosomal subunit, where it forms part of the central protuberance. In the 70S ribosome it contacts protein S13 of the 30S subunit (bridge B1b), connecting the 2 subunits; this bridge is implicated in subunit movement. Contacts the P site tRNA; the 5S rRNA and some of its associated proteins might help stabilize positioning of ribosome-bound tRNAs. The polypeptide is Large ribosomal subunit protein uL5 (Phocaeicola vulgatus (strain ATCC 8482 / DSM 1447 / JCM 5826 / CCUG 4940 / NBRC 14291 / NCTC 11154) (Bacteroides vulgatus)).